A 329-amino-acid polypeptide reads, in one-letter code: Lipoyl synthase (329 aa).

Residues cysteine 55, cysteine 60, cysteine 66, cysteine 81, cysteine 85, cysteine 88, and serine 292 each coordinate [4Fe-4S] cluster. Residues 67–281 (WEDREATFLI…KAEAEAIGFL (215 aa)) form the Radical SAM core domain.

The protein belongs to the radical SAM superfamily. Lipoyl synthase family. It depends on [4Fe-4S] cluster as a cofactor.

It is found in the cytoplasm. It carries out the reaction [[Fe-S] cluster scaffold protein carrying a second [4Fe-4S](2+) cluster] + N(6)-octanoyl-L-lysyl-[protein] + 2 oxidized [2Fe-2S]-[ferredoxin] + 2 S-adenosyl-L-methionine + 4 H(+) = [[Fe-S] cluster scaffold protein] + N(6)-[(R)-dihydrolipoyl]-L-lysyl-[protein] + 4 Fe(3+) + 2 hydrogen sulfide + 2 5'-deoxyadenosine + 2 L-methionine + 2 reduced [2Fe-2S]-[ferredoxin]. Its pathway is protein modification; protein lipoylation via endogenous pathway; protein N(6)-(lipoyl)lysine from octanoyl-[acyl-carrier-protein]: step 2/2. Its function is as follows. Catalyzes the radical-mediated insertion of two sulfur atoms into the C-6 and C-8 positions of the octanoyl moiety bound to the lipoyl domains of lipoate-dependent enzymes, thereby converting the octanoylated domains into lipoylated derivatives. This is Lipoyl synthase from Clavibacter sepedonicus (Clavibacter michiganensis subsp. sepedonicus).